A 352-amino-acid polypeptide reads, in one-letter code: Protein RecA (352 aa).

67-74 (GPESSGKT) serves as a coordination point for ATP.

The protein belongs to the RecA family.

The protein localises to the cytoplasm. Functionally, can catalyze the hydrolysis of ATP in the presence of single-stranded DNA, the ATP-dependent uptake of single-stranded DNA by duplex DNA, and the ATP-dependent hybridization of homologous single-stranded DNAs. It interacts with LexA causing its activation and leading to its autocatalytic cleavage. The sequence is that of Protein RecA from Chlamydia trachomatis serovar A (strain ATCC VR-571B / DSM 19440 / HAR-13).